A 457-amino-acid chain; its full sequence is Argininosuccinate lyase (457 aa).

Belongs to the lyase 1 family. Argininosuccinate lyase subfamily.

Its subcellular location is the cytoplasm. The catalysed reaction is 2-(N(omega)-L-arginino)succinate = fumarate + L-arginine. The protein operates within amino-acid biosynthesis; L-arginine biosynthesis; L-arginine from L-ornithine and carbamoyl phosphate: step 3/3. The chain is Argininosuccinate lyase from Erwinia tasmaniensis (strain DSM 17950 / CFBP 7177 / CIP 109463 / NCPPB 4357 / Et1/99).